The sequence spans 1151 residues: PPi-type phosphoenolpyruvate carboxykinase 1 (1151 aa).

The stretch at 1083-1129 (RQKLEVAKLNKDLAYLNKTIAEKPRLAETLNKQIAAVKEELQYVSSE) forms a coiled coil.

It belongs to the PPi-type phosphoenolpyruvate carboxykinase family. In terms of assembly, monomer and trimer; forms heterotrimers with PEPCK2 and PEPCK3.

The protein resides in the cytoplasm. It is found in the cytosol. It catalyses the reaction oxaloacetate + diphosphate = phosphoenolpyruvate + phosphate + CO2. Inorganic pyrophosphate (PPi)-dependent phosphoenolpyruvate carboxykinase, which regulates the carbon flow of the central metabolism by fixing CO(2) to phosphoenolpyruvate to produce oxaloacetate. Can also produce pyruvate and diphosphate from phosphoenolpyruvate and phosphate. The chain is PPi-type phosphoenolpyruvate carboxykinase 1 from Entamoeba histolytica (strain ATCC 30459 / HM-1:IMSS / ABRM).